The chain runs to 206 residues: Ras-related protein Ral-B (206 aa).

21 to 29 (GSGGVGKSA) contacts GTP. Residues 43–51 (YEPTKADSY) carry the Effector region motif. GTP contacts are provided by residues 68-72 (DTAGQ), 128-131 (NKSD), and 158-160 (SAK). The disordered stretch occupies residues 181–206 (MSENKDKNGRKSGKSKKSFKERCCLL). Residue Cys-203 is modified to Cysteine methyl ester. A lipid anchor (S-geranylgeranyl cysteine) is attached at Cys-203. The propeptide at 204-206 (CLL) is removed in mature form.

It belongs to the small GTPase superfamily. Ras family. In terms of assembly, interacts with EXOC2/Sec5 and EXOC8/Exo84. Interacts (via effector domain) with RALBP1. Post-translationally, prenylation is essential for membrane localization. The farnesylated form confers resistance to the proapoptotic and anti-anchorage-dependent growth effects of some geranylgeranyltransferase I inhibitors.

It localises to the cell membrane. Its subcellular location is the midbody. The enzyme catalyses GTP + H2O = GDP + phosphate + H(+). Alternates between an inactive form bound to GDP and an active form bound to GTP. Activated by a guanine nucleotide-exchange factor (GEF) and inactivated by a GTPase-activating protein (GAP). Functionally, multifunctional GTPase involved in a variety of cellular processes including gene expression, cell migration, cell proliferation, oncogenic transformation and membrane trafficking. Accomplishes its multiple functions by interacting with distinct downstream effectors. Acts as a GTP sensor for GTP-dependent exocytosis of dense core vesicles. Required both to stabilize the assembly of the exocyst complex and to localize functional exocyst complexes to the leading edge of migrating cells. Required for suppression of apoptosis. In late stages of cytokinesis, upon completion of the bridge formation between dividing cells, mediates exocyst recruitment to the midbody to drive abscission. Involved in ligand-dependent receptor mediated endocytosis of the EGF and insulin receptors. The polypeptide is Ras-related protein Ral-B (Ralb) (Rattus norvegicus (Rat)).